A 206-amino-acid chain; its full sequence is N-(5'-phosphoribosyl)anthranilate isomerase (206 aa).

This sequence belongs to the TrpF family.

The catalysed reaction is N-(5-phospho-beta-D-ribosyl)anthranilate = 1-(2-carboxyphenylamino)-1-deoxy-D-ribulose 5-phosphate. The protein operates within amino-acid biosynthesis; L-tryptophan biosynthesis; L-tryptophan from chorismate: step 3/5. The polypeptide is N-(5'-phosphoribosyl)anthranilate isomerase (Citrifermentans bemidjiense (strain ATCC BAA-1014 / DSM 16622 / JCM 12645 / Bem) (Geobacter bemidjiensis)).